A 317-amino-acid polypeptide reads, in one-letter code: Beta-ketoacyl-[acyl-carrier-protein] synthase III (317 aa).

Active-site residues include cysteine 112 and histidine 244. Positions 245–249 are ACP-binding; sequence QANLR. Asparagine 274 is an active-site residue.

It belongs to the thiolase-like superfamily. FabH family. Homodimer.

The protein resides in the cytoplasm. It carries out the reaction malonyl-[ACP] + acetyl-CoA + H(+) = 3-oxobutanoyl-[ACP] + CO2 + CoA. The protein operates within lipid metabolism; fatty acid biosynthesis. Catalyzes the condensation reaction of fatty acid synthesis by the addition to an acyl acceptor of two carbons from malonyl-ACP. Catalyzes the first condensation reaction which initiates fatty acid synthesis and may therefore play a role in governing the total rate of fatty acid production. Possesses both acetoacetyl-ACP synthase and acetyl transacylase activities. Its substrate specificity determines the biosynthesis of branched-chain and/or straight-chain of fatty acids. The chain is Beta-ketoacyl-[acyl-carrier-protein] synthase III from Salmonella typhi.